Consider the following 485-residue polypeptide: uncharacterized protein (485 aa).

Positions 151 to 201 (IKAPTNNSQSGDGNGGTNNDNLLGTFDIREKSNGKKGESNGKQGNGQDKKT) are disordered. The span at 155 to 174 (TNNSQSGDGNGGTNNDNLLG) shows a compositional bias: low complexity. Over residues 177–189 (DIREKSNGKKGES) the composition is skewed to basic and acidic residues.

It belongs to the MG185/MG260 family.

This is an uncharacterized protein from Mycoplasma pneumoniae (strain ATCC 29342 / M129 / Subtype 1) (Mycoplasmoides pneumoniae).